Consider the following 413-residue polypeptide: RNA-binding protein 41 (413 aa).

The segment at S225 to K247 is disordered. Positions K309–S387 constitute an RRM domain.

May bind RNA. The polypeptide is RNA-binding protein 41 (Rbm41) (Mus musculus (Mouse)).